Reading from the N-terminus, the 284-residue chain is Diaminopimelate epimerase (284 aa).

The substrate site is built by Asn21, Gln54, and Asn74. Catalysis depends on Cys83, which acts as the Proton donor. Residues 84–85 (GN), Asn167, Asn200, and 218–219 (ER) contribute to the substrate site. Cys227 functions as the Proton acceptor in the catalytic mechanism. 228-229 (GS) contacts substrate.

It belongs to the diaminopimelate epimerase family. Homodimer.

The protein resides in the cytoplasm. The enzyme catalyses (2S,6S)-2,6-diaminopimelate = meso-2,6-diaminopimelate. Its pathway is amino-acid biosynthesis; L-lysine biosynthesis via DAP pathway; DL-2,6-diaminopimelate from LL-2,6-diaminopimelate: step 1/1. Catalyzes the stereoinversion of LL-2,6-diaminopimelate (L,L-DAP) to meso-diaminopimelate (meso-DAP), a precursor of L-lysine and an essential component of the bacterial peptidoglycan. In Buchnera aphidicola subsp. Acyrthosiphon pisum (strain 5A), this protein is Diaminopimelate epimerase.